Here is a 50-residue protein sequence, read N- to C-terminus: Sperm protamine P1 (50 aa).

2 cysteine pairs are disulfide-bonded: C7-C15 and C39-C47.

It belongs to the protamine P1 family. As to quaternary structure, cross-linked by interchain disulfide bonds around the DNA-helix. In terms of tissue distribution, testis.

The protein resides in the nucleus. The protein localises to the chromosome. In terms of biological role, protamines substitute for histones in the chromatin of sperm during the haploid phase of spermatogenesis. They compact sperm DNA into a highly condensed, stable and inactive complex. The sequence is that of Sperm protamine P1 (PRM1) from Sus scrofa (Pig).